The chain runs to 555 residues: 2-succinyl-5-enolpyruvyl-6-hydroxy-3-cyclohexene-1-carboxylate synthase (555 aa).

Belongs to the TPP enzyme family. MenD subfamily. In terms of assembly, homodimer. Mg(2+) serves as cofactor. It depends on Mn(2+) as a cofactor. Thiamine diphosphate is required as a cofactor.

The catalysed reaction is isochorismate + 2-oxoglutarate + H(+) = 5-enolpyruvoyl-6-hydroxy-2-succinyl-cyclohex-3-ene-1-carboxylate + CO2. It functions in the pathway quinol/quinone metabolism; 1,4-dihydroxy-2-naphthoate biosynthesis; 1,4-dihydroxy-2-naphthoate from chorismate: step 2/7. Its pathway is quinol/quinone metabolism; menaquinone biosynthesis. Catalyzes the thiamine diphosphate-dependent decarboxylation of 2-oxoglutarate and the subsequent addition of the resulting succinic semialdehyde-thiamine pyrophosphate anion to isochorismate to yield 2-succinyl-5-enolpyruvyl-6-hydroxy-3-cyclohexene-1-carboxylate (SEPHCHC). The chain is 2-succinyl-5-enolpyruvyl-6-hydroxy-3-cyclohexene-1-carboxylate synthase from Bacteroides thetaiotaomicron (strain ATCC 29148 / DSM 2079 / JCM 5827 / CCUG 10774 / NCTC 10582 / VPI-5482 / E50).